We begin with the raw amino-acid sequence, 249 residues long: Triosephosphate isomerase (249 aa).

9–11 (NWK) contributes to the substrate binding site. H94 functions as the Electrophile in the catalytic mechanism. E166 acts as the Proton acceptor in catalysis. Substrate contacts are provided by residues G172, S211, and 232–233 (GG).

Belongs to the triosephosphate isomerase family. In terms of assembly, homodimer.

The protein localises to the cytoplasm. It catalyses the reaction D-glyceraldehyde 3-phosphate = dihydroxyacetone phosphate. Its pathway is carbohydrate biosynthesis; gluconeogenesis. The protein operates within carbohydrate degradation; glycolysis; D-glyceraldehyde 3-phosphate from glycerone phosphate: step 1/1. Its function is as follows. Involved in the gluconeogenesis. Catalyzes stereospecifically the conversion of dihydroxyacetone phosphate (DHAP) to D-glyceraldehyde-3-phosphate (G3P). This is Triosephosphate isomerase from Moorella thermoacetica (strain ATCC 39073 / JCM 9320).